The chain runs to 540 residues: ADP,ATP carrier protein 2 (540 aa).

11 helical membrane passes run 24–44 (FSKF…YCLL), 62–82 (VIPF…TMVY), 94–114 (VFYC…VIIY), 151–171 (IYYV…FWGL), 223–243 (SVML…IWLY), 295–315 (LLGL…FEVV), 337–357 (ITTL…GQCI), 367–387 (LVTP…IFAA), 391–411 (ISIF…WTGG), 458–478 (SGGS…AASL), and 480–500 (VIAL…AYIG).

Belongs to the ADP/ATP translocase tlc family.

It is found in the cell membrane. This Chlamydia pneumoniae (Chlamydophila pneumoniae) protein is ADP,ATP carrier protein 2 (tlcB).